The following is a 421-amino-acid chain: ATP-dependent RNA helicase RhlB (421 aa).

The Q motif signature appears at 9–37 (QKFSDFSLHPKVVEALEKKGFHNCTPIQA). In terms of domain architecture, Helicase ATP-binding spans 40-219 (LPLTLAGRDV…FEQMNNAEYI (180 aa)). 53–60 (AQTGTGKT) is a binding site for ATP. The DEAD box motif lies at 165–168 (DEAD). Residues 245–390 (RLLQTLIEEE…VSKYNPDALM (146 aa)) enclose the Helicase C-terminal domain. Residues 392–421 (DLPKPLRLTRPRTGNGPRRTGAPRNRRRSG) are disordered. Positions 402–414 (PRTGNGPRRTGAP) are enriched in low complexity.

Belongs to the DEAD box helicase family. RhlB subfamily. As to quaternary structure, component of the RNA degradosome, which is a multiprotein complex involved in RNA processing and mRNA degradation.

It is found in the cytoplasm. It carries out the reaction ATP + H2O = ADP + phosphate + H(+). Functionally, DEAD-box RNA helicase involved in RNA degradation. Has RNA-dependent ATPase activity and unwinds double-stranded RNA. The chain is ATP-dependent RNA helicase RhlB from Shigella dysenteriae serotype 1 (strain Sd197).